We begin with the raw amino-acid sequence, 283 residues long: Thymidylate synthase (283 aa).

Residue Arg22 coordinates dUMP. Cys160 (nucleophile) is an active-site residue. DUMP-binding positions include 180-183 (RSCD), Asn191, and 221-223 (HIY). Asp183 is a binding site for (6R)-5,10-methylene-5,6,7,8-tetrahydrofolate. Ser282 serves as a coordination point for (6R)-5,10-methylene-5,6,7,8-tetrahydrofolate.

Belongs to the thymidylate synthase family. Bacterial-type ThyA subfamily. Homodimer.

The protein localises to the cytoplasm. It carries out the reaction dUMP + (6R)-5,10-methylene-5,6,7,8-tetrahydrofolate = 7,8-dihydrofolate + dTMP. Its pathway is pyrimidine metabolism; dTTP biosynthesis. Functionally, catalyzes the reductive methylation of 2'-deoxyuridine-5'-monophosphate (dUMP) to 2'-deoxythymidine-5'-monophosphate (dTMP) while utilizing 5,10-methylenetetrahydrofolate (mTHF) as the methyl donor and reductant in the reaction, yielding dihydrofolate (DHF) as a by-product. This enzymatic reaction provides an intracellular de novo source of dTMP, an essential precursor for DNA biosynthesis. The chain is Thymidylate synthase from Haemophilus influenzae (strain 86-028NP).